A 643-amino-acid chain; its full sequence is 1-deoxy-D-xylulose-5-phosphate synthase (643 aa).

Residues His-78 and 119 to 121 (AHS) contribute to the thiamine diphosphate site. Asp-150 is a Mg(2+) binding site. Thiamine diphosphate-binding positions include 151 to 152 (GS), Asn-179, Tyr-288, and Glu-370. Residue Asn-179 participates in Mg(2+) binding.

The protein belongs to the transketolase family. DXPS subfamily. In terms of assembly, homodimer. Mg(2+) is required as a cofactor. The cofactor is thiamine diphosphate.

The catalysed reaction is D-glyceraldehyde 3-phosphate + pyruvate + H(+) = 1-deoxy-D-xylulose 5-phosphate + CO2. It participates in metabolic intermediate biosynthesis; 1-deoxy-D-xylulose 5-phosphate biosynthesis; 1-deoxy-D-xylulose 5-phosphate from D-glyceraldehyde 3-phosphate and pyruvate: step 1/1. Its function is as follows. Catalyzes the acyloin condensation reaction between C atoms 2 and 3 of pyruvate and glyceraldehyde 3-phosphate to yield 1-deoxy-D-xylulose-5-phosphate (DXP). In Brucella canis (strain ATCC 23365 / NCTC 10854 / RM-666), this protein is 1-deoxy-D-xylulose-5-phosphate synthase.